A 95-amino-acid chain; its full sequence is Large ribosomal subunit protein bL27 (95 aa).

A propeptide spanning residues 1-8 (MEMNLQFF) is cleaved from the precursor. The tract at residues 1–34 (MEMNLQFFSHHKGGGSTSNGRDSAGRRLGTKRAD) is disordered.

It belongs to the bacterial ribosomal protein bL27 family. In terms of processing, the N-terminus is cleaved by ribosomal processing cysteine protease Prp.

This is Large ribosomal subunit protein bL27 from Pediococcus pentosaceus (strain ATCC 25745 / CCUG 21536 / LMG 10740 / 183-1w).